A 483-amino-acid polypeptide reads, in one-letter code: UDP-glucosyl transferase 73B2 (483 aa).

Residue H22 is the Proton acceptor of the active site. H22 contacts an anthocyanidin. D133 functions as the Charge relay in the catalytic mechanism. A355, Q357, H372, W375, N376, S377, and E380 together coordinate UDP-alpha-D-glucose. Position 395 (A395) interacts with an anthocyanidin. UDP-alpha-D-glucose contacts are provided by E396 and Q397.

This sequence belongs to the UDP-glycosyltransferase family. As to expression, expressed in roots and flowers.

The enzyme catalyses a 7-O-hydroxy-flavonol + UDP-alpha-D-glucose = a flavonol 7-O-beta-D-glucoside + UDP + H(+). It functions in the pathway secondary metabolite biosynthesis; flavonoid biosynthesis. Functionally, catalyzes the glycosylation of flavonoids from UDP-glucose. Uses a wide range of flavonoid substrates including flavonols (quercetin, kaempferol, isorhamnetin, 3-OH 7,2',4'-MeO-flavone), flavones (luteolin, apigenin), flavanones (naringenin, hesperetin), flavanonols (taxifolin), isoflavones (genistein, daidzein), flavonol glycosides (quercitrin, isoquercitrin, rutin), and chalcones (isoliquiritigenin). Specific for the C-7 position, with a 20-fold lower activity for the C-3 position. In Arabidopsis thaliana (Mouse-ear cress), this protein is UDP-glucosyl transferase 73B2 (UGT73B2).